We begin with the raw amino-acid sequence, 2488 residues long: Neuron navigator 2 (2488 aa).

A Calponin-homology (CH) domain is found at 85 to 192 (GFDTQIYTDW…LFFSLSRYKQ (108 aa)). Composition is skewed to low complexity over residues 194–204 (QQQPQKQHLSS), 221–247 (QAGTPQQQVPVTPQAPCQPHQPAPHQQ), and 255–267 (QSSASSKDSSQSK). 2 disordered regions span residues 194–675 (QQQP…GSNT) and 706–727 (TEGNVTAESSSTGVSVEPSHFT). A compositionally biased stretch (polar residues) spans 299 to 315 (GGSTTANNRRSQSFNNY). The segment covering 356–369 (SGSSSTPTNCSTSS) has biased composition (low complexity). A compositionally biased stretch (polar residues) spans 384 to 396 (KSLSVKHSATVSM). Pro residues predominate over residues 401–410 (PPGPEAPRPT). Over residues 492-506 (RTFSRALTNKKSSLK) the composition is skewed to polar residues. Positions 498 to 531 (LTNKKSSLKGNEKEKEKQQREKDKEKSKDLAKRA) form a coiled coil. Residues 507-547 (GNEKEKEKQQREKDKEKSKDLAKRASVTERLDLKEEPKEDP) show a composition bias toward basic and acidic residues. The span at 592 to 606 (MKSMPGKSPSAPAPS) shows a compositional bias: low complexity. Positions 615-626 (GKLSSGLPQQKP) are enriched in polar residues. 2 stretches are compositionally biased toward low complexity: residues 633 to 642 (SSSSSSLASS) and 657 to 675 (SSQTVSGSVGTTQTTGSNT). The span at 706–719 (TEGNVTAESSSTGV) shows a compositional bias: polar residues. Positions 743-771 (EARRLRTVKNIADLRQNLEETMSSLRGTQ) form a coiled coil. 9 disordered regions span residues 804–824 (LSWRLGQSSPRLQAGDAPSMG), 939–1151 (LGLG…QSGS), 1177–1200 (KSSALVSRSAGRKSSMDGAQNQDD), 1213–1283 (YRSL…SDNE), 1295–1338 (PAAQ…PIAT), 1355–1412 (MTQQ…TNAS), 1440–1460 (SLSSGGVPSHNSSTGLIASSK), 1473–1560 (VKTT…VTSP), and 1591–1629 (SLSNADGQYDPYTDSRFRNSSMSLDEKSRTMSRSGSFRD). The segment covering 939 to 985 (LGLGDADSWDDSSSVSSGISDTIDNLSTDDINTSSSISSYANTPASS) has biased composition (low complexity). Residues 1091 to 1102 (KTDDAKVSEKGR) are compositionally biased toward basic and acidic residues. Positions 1130 to 1142 (PSSSRTPTANANS) are enriched in polar residues. Low complexity predominate over residues 1220–1245 (SKSNSRNGAGNRSSTSSIDSNISSKS). Positions 1299–1309 (PVSSPAQTSLQ) are enriched in polar residues. Composition is skewed to low complexity over residues 1363–1380 (SPSGSGVLSSGSSSPLYS) and 1388–1404 (SPLASSPSSAHSAPSNS). The span at 1440-1456 (SLSSGGVPSHNSSTGLI) shows a compositional bias: polar residues. The span at 1477–1489 (LSESPLSSPAASP) shows a compositional bias: low complexity. 3 positions are modified to phosphoserine: serine 1480, serine 1484, and serine 1488. Composition is skewed to basic and acidic residues over residues 1498 to 1510 (RKQDSDPHLDRNT) and 1526 to 1535 (TQEDAKEWLR). Low complexity predominate over residues 1549–1560 (SPFSSGSSVTSP). Positions 1686 to 1773 (EEKCQSEIRK…AAAQAAINGV (88 aa)) form a coiled coil. Disordered regions lie at residues 1790–1887 (ADLR…LRNS) and 1951–1985 (AENDRLKSESQGSGCSRAPSQVSISASPRQSMGLS). Polar residues-rich tracts occupy residues 1800-1820 (SDSVSSINSATSHSSVGSNIE), 1875-1887 (NGSTGSTPLLRNS), and 1959-1985 (ESQGSGCSRAPSQVSISASPRQSMGLS). A coiled-coil region spans residues 1897 to 1964 (MDSEAETVMQ…RLKSESQGSG (68 aa)). Phosphoserine is present on serine 1977. Position 2157-2164 (2157-2164 (GPSGTGKT)) interacts with ATP. Positions 2423–2488 (DGYSMPREGS…ILDSSLESTL (66 aa)) are disordered. The segment covering 2460 to 2473 (YSSPQSYDSDSNSN) has biased composition (low complexity).

It belongs to the Nav/unc-53 family. In terms of tissue distribution, highly expressed in the brain, kidney and liver. Also expressed in the thyroid, mammary gland, spinal cord, heart, placenta and lung. Abundantly expressed in colon cancers.

It is found in the nucleus. The catalysed reaction is ATP + H2O = ADP + phosphate + H(+). Possesses 3' to 5' helicase activity and exonuclease activity. Involved in neuronal development, specifically in the development of different sensory organs. This Homo sapiens (Human) protein is Neuron navigator 2 (NAV2).